The following is a 225-amino-acid chain: Large ribosomal subunit protein uL1 (225 aa).

The protein belongs to the universal ribosomal protein uL1 family. In terms of assembly, part of the 50S ribosomal subunit.

Functionally, binds directly to 23S rRNA. The L1 stalk is quite mobile in the ribosome, and is involved in E site tRNA release. Protein L1 is also a translational repressor protein, it controls the translation of the L11 operon by binding to its mRNA. In Rhodopirellula baltica (strain DSM 10527 / NCIMB 13988 / SH1), this protein is Large ribosomal subunit protein uL1.